The following is a 645-amino-acid chain: Macrolide export ATP-binding/permease protein MacB (645 aa).

The 239-residue stretch at Ile6 to Lys244 folds into the ABC transporter domain. An ATP-binding site is contributed by Gly42 to Ser49. Transmembrane regions (helical) follow at residues Ala271 to Gly291, Phe520 to Met540, Val577 to Ile597, and Pro608 to Leu628.

Belongs to the ABC transporter superfamily. Macrolide exporter (TC 3.A.1.122) family. Homodimer.

It localises to the cell inner membrane. Its function is as follows. Non-canonical ABC transporter that contains transmembrane domains (TMD), which form a pore in the inner membrane, and an ATP-binding domain (NBD), which is responsible for energy generation. Confers resistance against macrolides. The chain is Macrolide export ATP-binding/permease protein MacB from Hyphomonas neptunium (strain ATCC 15444).